The primary structure comprises 230 residues: PsbP-like protein 1, chloroplastic (230 aa).

This sequence belongs to the PsbP family.

The protein localises to the plastid. Its subcellular location is the chloroplast thylakoid lumen. Required for efficient repair of photodamaged PSII, but not tightly associated with the complex. The protein is PsbP-like protein 1, chloroplastic (PPL1) of Arabidopsis thaliana (Mouse-ear cress).